The primary structure comprises 497 residues: Transcription termination/antitermination protein NusA (497 aa).

One can recognise an S1 motif domain in the interval 135 to 200 (GKILTGIVKK…RGAQLFVTRS (66 aa)). Positions 302–372 (RHTIDIAVDS…LKIDQKISNI (71 aa)) constitute a KH domain. 2 repeat units span residues 364-414 (KIDQ…KKAL) and 439-489 (GMNQ…RNIC). The tract at residues 364 to 489 (KIDQKISNIL…MLIMAARNIC (126 aa)) is 2 X 51 AA approximate repeats.

The protein belongs to the NusA family. Monomer. Binds directly to the core enzyme of the DNA-dependent RNA polymerase and to nascent RNA.

The protein resides in the cytoplasm. In terms of biological role, participates in both transcription termination and antitermination. The protein is Transcription termination/antitermination protein NusA of Buchnera aphidicola subsp. Baizongia pistaciae (strain Bp).